Here is a 200-residue protein sequence, read N- to C-terminus: LexA repressor (200 aa).

The H-T-H motif DNA-binding region spans Arg28 to Lys48. Catalysis depends on for autocatalytic cleavage activity residues Ser121 and Lys158.

Belongs to the peptidase S24 family. Homodimer.

The catalysed reaction is Hydrolysis of Ala-|-Gly bond in repressor LexA.. In terms of biological role, represses a number of genes involved in the response to DNA damage (SOS response), including recA and lexA. In the presence of single-stranded DNA, RecA interacts with LexA causing an autocatalytic cleavage which disrupts the DNA-binding part of LexA, leading to derepression of the SOS regulon and eventually DNA repair. This Hahella chejuensis (strain KCTC 2396) protein is LexA repressor.